The primary structure comprises 289 residues: Cbb3-type cytochrome c oxidase subunit FixP (289 aa).

The Cytoplasmic segment spans residues Met-1–Arg-33. Residues Trp-34–Trp-56 form a helical membrane-spanning segment. Residues Pro-57–Glu-289 lie on the Periplasmic side of the membrane. Cytochrome c domains lie at Phe-110–Thr-198 and His-205–Gly-286. Residues Cys-123, Cys-126, His-127, Met-175, Cys-218, Cys-221, His-222, and Met-263 each coordinate heme c.

The protein belongs to the CcoP / FixP family. Component of the cbb3-type cytochrome c oxidase at least composed of FixN, FixO, FixQ and FixP. It depends on heme c as a cofactor.

It localises to the cell inner membrane. It participates in energy metabolism; oxidative phosphorylation. Its function is as follows. C-type cytochrome. Part of the cbb3-type cytochrome c oxidase complex. FixP subunit is required for transferring electrons from donor cytochrome c via its heme groups to FixO subunit. From there, electrons are shuttled to the catalytic binuclear center of FixN subunit where oxygen reduction takes place. The complex also functions as a proton pump. The chain is Cbb3-type cytochrome c oxidase subunit FixP from Sinorhizobium medicae (strain WSM419) (Ensifer medicae).